Consider the following 1219-residue polypeptide: MECALLCLCALRAAGPGPPWGPAGLGRLAKALQLCCFCCASVAVALASDSGSSGGSGLNDDYVFVVPVEVDSGGSYISHDILHHRKRRSAHGASNSLHYRVSAFGQDLHLELKPSAILSSHFRVQVLGKDGASETREPEVPQCLYQGFIRNDSSSSVAVSTCAGLSGLIRTRDNEFLISPLPQLLAQEHNYSSPAGHHPHVLYKRTAEKRVRWYQDYPGSQRTYPGHSPSHTPPASQSQEPEYSHRRWQKRHFCGRRKKYAPKPPAEDAYLRFDEYGGTGRPRRSAGKSQNGLNVETLVVADAKMVEKHGKDDVTTYILTVMNMVSSLFKDGTIGSDINIVVVSLILLEEEPEGLLINHHADQSLNSFCQWQSALVGKNGKRHDHAILLTGFDICSWKNEPCDTLGFAPISGMCSKYRSCTINEDTGLGLAFTIAHESGHNFGMVHDGEGNPCRKAEGNIMSPTLTGNNGVFSWSSCSRQYLKKFLSTPQAGCLVDEPKQTGQYKYPDKLPGQIYDADMQCKWQFGAKAKLCSLGVMKDICKSLWCHRVGHRCETKFMPAAEGTACGLSMWCRQGQCVKLGELGPRPIHGQWSAWSKWSECSRTCGGGVKFQERHCSNPKPQYGGKYCPGSSRIYKLCNINPCPENSLDFRAQQCAEYNNKPFRGWLYRWKPYTKVEEEDRCKLYCKAENFEFFFAMSGKVKDGTPCSPHRNDVCIDGICELVGCDHELGSKAVSDACGVCKGDNSTCKFYKGLYLSQHKANEYYPVVTIPAGARSIEIQELQLSSSYLAVRSLSQKYYLTGGWSIDWPGDFTFAGTTFEYQRSFNRPERLYAPGPTNETLVFEILTQGKNPGIAWKYALPKVMNVTQPATKRYHHTWRTVQSDCSVTCGGGYISIKAICLRDQHTQVNSSFCSVRTKPATEPKICNAFSCPAYWLPGEWSACSKSCAGGQQSRKIRCVQKKPFQKEEAVLHSLCPVSTPTQVQVCNSHACPPEWSPSPWSQCSKTCGRGVRRREVLCKSPAAETLPESLCSSSPRPEAQEGCVLGRCPKNNRLQWIASAWSECSATCGLGVRKRELKCVEKTLQGKLITFPERRCRNIKKPSLELEEACNQRTCPVYSMAVASWYSSPWQQCTVTCGGGVQTRSVHCMQQGRPSSSCLLHQKPPVLRACNTNFCPAPEKKDDPSCVDFFSWCHLVPQHGVCNHKFYGKQCCRSCTRKS.

The signal sequence occupies residues 1 to 47 (MECALLCLCALRAAGPGPPWGPAGLGRLAKALQLCCFCCASVAVALA). A propeptide spanning residues 48-284 (SDSGSSGGSG…EYGGTGRPRR (237 aa)) is cleaved from the precursor. N-linked (GlcNAc...) asparagine glycosylation is found at N151 and N190. Positions 217 to 248 (YPGSQRTYPGHSPSHTPPASQSQEPEYSHRRW) are disordered. Over residues 218 to 241 (PGSQRTYPGHSPSHTPPASQSQEP) the composition is skewed to polar residues. The 206-residue stretch at 293–498 (LNVETLVVAD…PQAGCLVDEP (206 aa)) folds into the Peptidase M12B domain. Disulfide bonds link C369–C420, C395–C402, C414–C493, C453–C477, C521–C546, C532–C553, C541–C572, C566–C577, C601–C638, C605–C643, and C616–C628. H436 is a binding site for Zn(2+). Residue E437 is part of the active site. Positions 440 and 446 each coordinate Zn(2+). Residues 589 to 644 (HGQWSAWSKWSECSRTCGGGVKFQERHCSNPKPQYGGKYCPGSSRIYKLCNINPCP) enclose the TSP type-1 1 domain. N-linked (GlcNAc...) asparagine glycosylation is found at N745, N838, N865, and N909. TSP type-1 domains are found at residues 931 to 990 (CPAY…NSHA), 991 to 1049 (CPPE…GRCP), 1052 to 1116 (NRLQ…RTCP), and 1121 to 1176 (AVAS…NFCP). Residues 1182–1219 (DDPSCVDFFSWCHLVPQHGVCNHKFYGKQCCRSCTRKS) form the PLAC domain.

Zn(2+) is required as a cofactor. In terms of processing, the precursor is cleaved by a furin endopeptidase. Post-translationally, glycosylated. Can be O-fucosylated by POFUT2 on a serine or a threonine residue found within the consensus sequence C1-X(2)-(S/T)-C2-G of the TSP type-1 repeat domains where C1 and C2 are the first and second cysteine residue of the repeat, respectively. Fucosylated repeats can then be further glycosylated by the addition of a beta-1,3-glucose residue by the glucosyltransferase, B3GALTL. Fucosylation mediates the efficient secretion of ADAMTS family members. Can also be C-glycosylated with one or two mannose molecules on tryptophan residues within the consensus sequence W-X-X-W of the TPRs, and N-glycosylated. These other glycosylations can also facilitate secretion.

It is found in the secreted. It localises to the extracellular space. Its subcellular location is the extracellular matrix. In Mus musculus (Mouse), this protein is A disintegrin and metalloproteinase with thrombospondin motifs 18 (Adamts18).